Here is a 379-residue protein sequence, read N- to C-terminus: Dual-specificity RNA methyltransferase RlmN (379 aa).

Catalysis depends on Glu95, which acts as the Proton acceptor. A Radical SAM core domain is found at 101–345 (EETRGTLCVS…TTVRKTRGDD (245 aa)). A disulfide bond links Cys108 and Cys350. Cys115, Cys119, and Cys122 together coordinate [4Fe-4S] cluster. Residues 176 to 177 (GE), Ser208, 230 to 232 (SLH), and Asn307 each bind S-adenosyl-L-methionine. The S-methylcysteine intermediate role is filled by Cys350.

This sequence belongs to the radical SAM superfamily. RlmN family. [4Fe-4S] cluster is required as a cofactor.

Its subcellular location is the cytoplasm. It catalyses the reaction adenosine(2503) in 23S rRNA + 2 reduced [2Fe-2S]-[ferredoxin] + 2 S-adenosyl-L-methionine = 2-methyladenosine(2503) in 23S rRNA + 5'-deoxyadenosine + L-methionine + 2 oxidized [2Fe-2S]-[ferredoxin] + S-adenosyl-L-homocysteine. It carries out the reaction adenosine(37) in tRNA + 2 reduced [2Fe-2S]-[ferredoxin] + 2 S-adenosyl-L-methionine = 2-methyladenosine(37) in tRNA + 5'-deoxyadenosine + L-methionine + 2 oxidized [2Fe-2S]-[ferredoxin] + S-adenosyl-L-homocysteine. Functionally, specifically methylates position 2 of adenine 2503 in 23S rRNA and position 2 of adenine 37 in tRNAs. m2A2503 modification seems to play a crucial role in the proofreading step occurring at the peptidyl transferase center and thus would serve to optimize ribosomal fidelity. This Burkholderia cenocepacia (strain HI2424) protein is Dual-specificity RNA methyltransferase RlmN.